The chain runs to 77 residues: Epoxide hydrolase (77 aa).

As to quaternary structure, monomer.

The enzyme catalyses an epoxide + H2O = an ethanediol. Functionally, this enzyme acts on aliphatic epoxides. Its substrates include epichlorohydrin, epibromohydrin, epoxyoctane and styrene epoxide. The polypeptide is Epoxide hydrolase (Pseudomonas sp. (strain AD1)).